We begin with the raw amino-acid sequence, 722 residues long: Dual specificity tyrosine-phosphorylation-regulated kinase 2 (722 aa).

Residue Ser-25 is modified to Phosphoserine. A disordered region spans residues 54–127; the sequence is TTTSLNGNGN…SGELKCNTPM (74 aa). The span at 66–119 shows a compositional bias: low complexity; it reads GNSNSNNNNNIGSPVSSSTTNSSNGGNERGSSTKSNSSSGSGSSGNSASSTGSG. In terms of domain architecture, Protein kinase spans 198–494; that stretch reads YEILEVIGKG…PDEAAHHEFL (297 aa). Residues 204–212 and Lys-227 each bind ATP; that span reads IGKGSFGQV. Catalysis depends on Asp-324, which acts as the Proton acceptor. Residues Tyr-356 and Tyr-358 each carry the phosphotyrosine; by autocatalysis modification. 4 disordered regions span residues 494-519, 557-582, 624-643, and 679-722; these read LQPS…LNSV, TTKS…PDIK, GSGS…LPGT, and TTTH…FGRA. The span at 506–519 shows a compositional bias: low complexity; it reads RMSSSSSSSGLNSV. The span at 557–576 shows a compositional bias: polar residues; sequence TTKSRQQPPSQSHGHAQSNG. 2 stretches are compositionally biased toward low complexity: residues 626-635 and 689-707; these read GSTHHVSSAA and GQQQ…MSHS.

It belongs to the protein kinase superfamily. CMGC Ser/Thr protein kinase family. MNB/DYRK subfamily. It depends on Mg(2+) as a cofactor. In terms of processing, phosphorylated on serine/threonine residues.

It localises to the cytoplasm. It catalyses the reaction L-seryl-[protein] + ATP = O-phospho-L-seryl-[protein] + ADP + H(+). The catalysed reaction is L-threonyl-[protein] + ATP = O-phospho-L-threonyl-[protein] + ADP + H(+). The enzyme catalyses L-tyrosyl-[protein] + ATP = O-phospho-L-tyrosyl-[protein] + ADP + H(+). Its activity is regulated as follows. Autophosphorylates on Tyr-356 and Tyr-358. In vitro; can phosphorylate exogenous substrates on Ser and Thr residues. May have a physiological role in development being involved in cellular growth and differentiation. The protein is Dual specificity tyrosine-phosphorylation-regulated kinase 2 of Drosophila melanogaster (Fruit fly).